Reading from the N-terminus, the 74-residue chain is Anaphase-promoting complex subunit 13 (74 aa).

The disordered stretch occupies residues L33–K56.

Belongs to the APC13 family. The mammalian APC/C is composed at least of 14 distinct subunits ANAPC1, ANAPC2, CDC27/APC3, ANAPC4, ANAPC5, CDC16/APC6, ANAPC7, CDC23/APC8, ANAPC10, ANAPC11, CDC26/APC12, ANAPC13, ANAPC15 and ANAPC16 that assemble into a complex of at least 19 chains with a combined molecular mass of around 1.2 MDa; APC/C interacts with FZR1 and FBXO5.

It localises to the nucleus. It functions in the pathway protein modification; protein ubiquitination. In terms of biological role, component of the anaphase promoting complex/cyclosome (APC/C), a cell cycle-regulated E3 ubiquitin ligase that controls progression through mitosis and the G1 phase of the cell cycle. The APC/C complex acts by mediating ubiquitination and subsequent degradation of target proteins: it mainly mediates the formation of 'Lys-11'-linked polyubiquitin chains and, to a lower extent, the formation of 'Lys-48'- and 'Lys-63'-linked polyubiquitin chains. The APC/C complex catalyzes assembly of branched 'Lys-11'-/'Lys-48'-linked branched ubiquitin chains on target proteins. This chain is Anaphase-promoting complex subunit 13 (Anapc13), found in Mus musculus (Mouse).